The chain runs to 292 residues: ATP synthase gamma chain (292 aa).

Belongs to the ATPase gamma chain family. In terms of assembly, F-type ATPases have 2 components, CF(1) - the catalytic core - and CF(0) - the membrane proton channel. CF(1) has five subunits: alpha(3), beta(3), gamma(1), delta(1), epsilon(1). CF(0) has three main subunits: a, b and c.

It is found in the cell inner membrane. Produces ATP from ADP in the presence of a proton gradient across the membrane. The gamma chain is believed to be important in regulating ATPase activity and the flow of protons through the CF(0) complex. The polypeptide is ATP synthase gamma chain (Rhodopseudomonas palustris (strain BisB18)).